Reading from the N-terminus, the 176-residue chain is Neuroblastoma suppressor of tumorigenicity 1 (176 aa).

The signal sequence occupies residues 1 to 17 (MTVWLLIGFLLPVAIFA). Disulfide bonds link Cys-34–Cys-84, Cys-48–Cys-98, Cys-58–Cys-117, Cys-62–Cys-119, and Cys-81–Cys-122. In terms of domain architecture, CTCK spans 34–123 (CEAKNITQIV…ILQCSCQACG (90 aa)). The tract at residues 148 to 176 (ETLGHHHHRPPAREEDSPAQSQREGESEE) is disordered.

Belongs to the DAN family. Interacts with bmp2; the interaction is blocked in presence of nog.

The protein resides in the secreted. Functionally, may act as a tumor suppressor. Cytokine that has an axial patterning activity. Acts like bone morpho-genetic protein (BMP) antagonist in embryonic explants. Blocks the bmp2 activity. The sequence is that of Neuroblastoma suppressor of tumorigenicity 1 (nbl1) from Xenopus tropicalis (Western clawed frog).